The chain runs to 663 residues: DNA ligase (663 aa).

NAD(+) contacts are provided by residues 31-35 (DYEYD), 80-81 (SL), and Glu109. Lys111 acts as the N6-AMP-lysine intermediate in catalysis. NAD(+) contacts are provided by Arg132, Glu167, Lys283, and Lys307. 4 residues coordinate Zn(2+): Cys401, Cys404, Cys419, and Cys424. Positions 586–663 (KIDNRFLGKT…TEEDLKDMIK (78 aa)) constitute a BRCT domain.

Belongs to the NAD-dependent DNA ligase family. LigA subfamily. Requires Mg(2+) as cofactor. Mn(2+) is required as a cofactor.

The catalysed reaction is NAD(+) + (deoxyribonucleotide)n-3'-hydroxyl + 5'-phospho-(deoxyribonucleotide)m = (deoxyribonucleotide)n+m + AMP + beta-nicotinamide D-nucleotide.. In terms of biological role, DNA ligase that catalyzes the formation of phosphodiester linkages between 5'-phosphoryl and 3'-hydroxyl groups in double-stranded DNA using NAD as a coenzyme and as the energy source for the reaction. It is essential for DNA replication and repair of damaged DNA. In Clostridium kluyveri (strain NBRC 12016), this protein is DNA ligase.